The primary structure comprises 204 residues: Glycerol-3-phosphate acyltransferase (204 aa).

A run of 5 helical transmembrane segments spans residues 8–28 (MLVF…CYIF), 53–73 (VPAI…VVLA), 81–101 (FITA…IFFG), 116–136 (FGFS…VAVI), and 155–175 (VIFT…IIIL).

Belongs to the PlsY family. Probably interacts with PlsX.

It localises to the cell inner membrane. The enzyme catalyses an acyl phosphate + sn-glycerol 3-phosphate = a 1-acyl-sn-glycero-3-phosphate + phosphate. The protein operates within lipid metabolism; phospholipid metabolism. Functionally, catalyzes the transfer of an acyl group from acyl-phosphate (acyl-PO(4)) to glycerol-3-phosphate (G3P) to form lysophosphatidic acid (LPA). This enzyme utilizes acyl-phosphate as fatty acyl donor, but not acyl-CoA or acyl-ACP. The protein is Glycerol-3-phosphate acyltransferase of Francisella philomiragia subsp. philomiragia (strain ATCC 25017 / CCUG 19701 / FSC 153 / O#319-036).